We begin with the raw amino-acid sequence, 290 residues long: Ribosomal protein L11 methyltransferase (290 aa).

4 residues coordinate S-adenosyl-L-methionine: Thr135, Gly158, Asp180, and Asn227.

This sequence belongs to the methyltransferase superfamily. PrmA family.

It localises to the cytoplasm. It catalyses the reaction L-lysyl-[protein] + 3 S-adenosyl-L-methionine = N(6),N(6),N(6)-trimethyl-L-lysyl-[protein] + 3 S-adenosyl-L-homocysteine + 3 H(+). In terms of biological role, methylates ribosomal protein L11. The chain is Ribosomal protein L11 methyltransferase from Chelativorans sp. (strain BNC1).